Reading from the N-terminus, the 335-residue chain is Anthranilate phosphoribosyltransferase (335 aa).

5-phospho-alpha-D-ribose 1-diphosphate-binding positions include Gly-79, 82 to 83 (GD), Ser-87, 89 to 92 (NIST), 107 to 115 (KHGNRSITS), and Ser-119. Gly-79 provides a ligand contact to anthranilate. A Mg(2+)-binding site is contributed by Ser-91. Residue Asn-110 participates in anthranilate binding. Arg-165 is a binding site for anthranilate. Asp-224 and Glu-225 together coordinate Mg(2+).

The protein belongs to the anthranilate phosphoribosyltransferase family. Homodimer. Mg(2+) serves as cofactor.

It carries out the reaction N-(5-phospho-beta-D-ribosyl)anthranilate + diphosphate = 5-phospho-alpha-D-ribose 1-diphosphate + anthranilate. It functions in the pathway amino-acid biosynthesis; L-tryptophan biosynthesis; L-tryptophan from chorismate: step 2/5. Functionally, catalyzes the transfer of the phosphoribosyl group of 5-phosphorylribose-1-pyrophosphate (PRPP) to anthranilate to yield N-(5'-phosphoribosyl)-anthranilate (PRA). The chain is Anthranilate phosphoribosyltransferase from Lactococcus lactis subsp. cremoris (strain SK11).